Reading from the N-terminus, the 270-residue chain is 5'-nucleotidase SurE (270 aa).

Residues Asp8, Asp9, Ser40, and Asn98 each coordinate a divalent metal cation.

It belongs to the SurE nucleotidase family. The cofactor is a divalent metal cation.

The protein localises to the cytoplasm. The enzyme catalyses a ribonucleoside 5'-phosphate + H2O = a ribonucleoside + phosphate. Nucleotidase that shows phosphatase activity on nucleoside 5'-monophosphates. The chain is 5'-nucleotidase SurE from Cyanothece sp. (strain PCC 7425 / ATCC 29141).